The following is a 258-amino-acid chain: Ubiquinone/menaquinone biosynthesis C-methyltransferase UbiE (258 aa).

S-adenosyl-L-methionine-binding positions include T81, D102, and 130 to 131 (NA).

The protein belongs to the class I-like SAM-binding methyltransferase superfamily. MenG/UbiE family.

It catalyses the reaction a 2-demethylmenaquinol + S-adenosyl-L-methionine = a menaquinol + S-adenosyl-L-homocysteine + H(+). The catalysed reaction is a 2-methoxy-6-(all-trans-polyprenyl)benzene-1,4-diol + S-adenosyl-L-methionine = a 5-methoxy-2-methyl-3-(all-trans-polyprenyl)benzene-1,4-diol + S-adenosyl-L-homocysteine + H(+). It functions in the pathway quinol/quinone metabolism; menaquinone biosynthesis; menaquinol from 1,4-dihydroxy-2-naphthoate: step 2/2. Its pathway is cofactor biosynthesis; ubiquinone biosynthesis. Methyltransferase required for the conversion of demethylmenaquinol (DMKH2) to menaquinol (MKH2) and the conversion of 2-polyprenyl-6-methoxy-1,4-benzoquinol (DDMQH2) to 2-polyprenyl-3-methyl-6-methoxy-1,4-benzoquinol (DMQH2). This Rhizobium rhizogenes (strain K84 / ATCC BAA-868) (Agrobacterium radiobacter) protein is Ubiquinone/menaquinone biosynthesis C-methyltransferase UbiE.